The following is a 360-amino-acid chain: GTPase Obg (360 aa).

The Obg domain maps to 1-156 (MFVDSVEIII…KCVRLELKLI (156 aa)). Positions 157–360 (ADIGLVGFPN…LKFVLLKALP (204 aa)) constitute an OBG-type G domain. Residues 163–170 (GFPNAGKS), 188–192 (FTTLV), 210–213 (DIPG), 279–282 (NKCD), and 341–343 (SAV) each bind GTP. Positions 170 and 190 each coordinate Mg(2+).

Belongs to the TRAFAC class OBG-HflX-like GTPase superfamily. OBG GTPase family. Monomer. The cofactor is Mg(2+).

The protein localises to the cytoplasm. Its function is as follows. An essential GTPase which binds GTP, GDP and possibly (p)ppGpp with moderate affinity, with high nucleotide exchange rates and a fairly low GTP hydrolysis rate. Plays a role in control of the cell cycle, stress response, ribosome biogenesis and in those bacteria that undergo differentiation, in morphogenesis control. The protein is GTPase Obg of Helicobacter pylori (strain G27).